Reading from the N-terminus, the 120-residue chain is Immunoglobulin lambda variable 2-14 (120 aa).

An N-terminal signal peptide occupies residues 1–19 (MAWALLLLTLLTQGTGSWA). Pyrrolidone carboxylic acid is present on Q20. The tract at residues 20–44 (QSALTQPASVSGSPGQSITISCTGT) is framework-1. The region spanning 20-119 (QSALTQPASV…SSYTSSSTLH (100 aa)) is the Ig-like domain. A disulfide bond links C41 and C109. Positions 45-53 (SSDVGGYNY) are complementarity-determining-1. The segment at 54–70 (VSWYQQHPGKAPKLMIY) is framework-2. A complementarity-determining-2 region spans residues 71–73 (EVS). The segment at 74-109 (NRPSGVSNRFSGSKSGNTASLTISGLQAEDEADYYC) is framework-3. Residues 110–119 (SSYTSSSTLH) form a complementarity-determining-3 region.

Immunoglobulins are composed of two identical heavy chains and two identical light chains; disulfide-linked.

It localises to the secreted. The protein localises to the cell membrane. V region of the variable domain of immunoglobulin light chains that participates in the antigen recognition. Immunoglobulins, also known as antibodies, are membrane-bound or secreted glycoproteins produced by B lymphocytes. In the recognition phase of humoral immunity, the membrane-bound immunoglobulins serve as receptors which, upon binding of a specific antigen, trigger the clonal expansion and differentiation of B lymphocytes into immunoglobulins-secreting plasma cells. Secreted immunoglobulins mediate the effector phase of humoral immunity, which results in the elimination of bound antigens. The antigen binding site is formed by the variable domain of one heavy chain, together with that of its associated light chain. Thus, each immunoglobulin has two antigen binding sites with remarkable affinity for a particular antigen. The variable domains are assembled by a process called V-(D)-J rearrangement and can then be subjected to somatic hypermutations which, after exposure to antigen and selection, allow affinity maturation for a particular antigen. The chain is Immunoglobulin lambda variable 2-14 from Homo sapiens (Human).